A 274-amino-acid chain; its full sequence is NADPH-dependent 7-cyano-7-deazaguanine reductase (274 aa).

80-82 (VES) lines the substrate pocket. Position 82 to 83 (82 to 83 (SK)) interacts with NADPH. Cysteine 181 serves as the catalytic Thioimide intermediate. Catalysis depends on aspartate 188, which acts as the Proton donor. Position 220–221 (220–221 (HE)) interacts with substrate. 249–250 (RG) is a binding site for NADPH.

The protein belongs to the GTP cyclohydrolase I family. QueF type 2 subfamily. As to quaternary structure, homodimer.

The protein localises to the cytoplasm. The catalysed reaction is 7-aminomethyl-7-carbaguanine + 2 NADP(+) = 7-cyano-7-deazaguanine + 2 NADPH + 3 H(+). The protein operates within tRNA modification; tRNA-queuosine biosynthesis. In terms of biological role, catalyzes the NADPH-dependent reduction of 7-cyano-7-deazaguanine (preQ0) to 7-aminomethyl-7-deazaguanine (preQ1). The protein is NADPH-dependent 7-cyano-7-deazaguanine reductase of Burkholderia pseudomallei (strain 1710b).